Consider the following 297-residue polypeptide: MGNIFHIPVLLEEIINLLEASNISDGFVFVDCTLGEGGHSSAVLKKYQNINVIGIDRDDVVLNRAKESLIEFKGRVSYFNTWFDDFFSEYPLSSKINFILADLGISMFHYKMSGRGFSFFEDERLDMRLYPGAGGLSAYDIINTFDKKRLENLIYELSGERYSRRIVKSILEYRKIKKIETPRELQDIVSKAYPRIKLKINPATKTFQALRIYVNDELFRLKRSLPLWVESLSNNGVLAIVTFHSLEDKIVKEFFKGLSKDQYCILTKKPIMPRCEEKRFNSASRSAKLRVIKKLYE.

Residues 37-39, aspartate 56, phenylalanine 87, aspartate 102, and histidine 109 contribute to the S-adenosyl-L-methionine site; that span reads GGH.

Belongs to the methyltransferase superfamily. RsmH family.

The protein localises to the cytoplasm. It carries out the reaction cytidine(1402) in 16S rRNA + S-adenosyl-L-methionine = N(4)-methylcytidine(1402) in 16S rRNA + S-adenosyl-L-homocysteine + H(+). Its function is as follows. Specifically methylates the N4 position of cytidine in position 1402 (C1402) of 16S rRNA. In Borrelia turicatae (strain 91E135), this protein is Ribosomal RNA small subunit methyltransferase H.